A 173-amino-acid chain; its full sequence is Transmembrane protein 278 (173 aa).

A compositionally biased stretch (acidic residues) spans 1–14 (MSEQERETEEDEGV). The tract at residues 1 to 25 (MSEQERETEEDEGVASDTAPMLPRR) is disordered. The next 3 membrane-spanning stretches (helical) occupy residues 31-51 (HISV…VLSG), 53-73 (ALVG…LVLL), and 107-127 (AALI…AAAA). The interval 141–165 (DPARTPAPRRPPRSSGDLADGHPDE) is disordered.

The protein belongs to the TMEM88 family.

The protein localises to the membrane. The sequence is that of Transmembrane protein 278 (Tmem278) from Mus musculus (Mouse).